The primary structure comprises 111 residues: UPF0339 protein ACIAD0721 (111 aa).

2 repeat units span residues 10–58 (AKDG…RYER) and 61–109 (AKND…VKDL). The disordered stretch occupies residues 89 to 111 (SRDKGIESVKNNGTTATVKDLTG).

It belongs to the UPF0339 family. Duplicated subfamily.

The protein is UPF0339 protein ACIAD0721 of Acinetobacter baylyi (strain ATCC 33305 / BD413 / ADP1).